A 615-amino-acid chain; its full sequence is Zinc finger protein 181 (615 aa).

Positions 48–120 (VTFSDVAIDF…EKKLSKGLIP (73 aa)) constitute a KRAB domain. Residues Lys153 and Lys170 each participate in a glycyl lysine isopeptide (Lys-Gly) (interchain with G-Cter in SUMO2) cross-link. 11 consecutive C2H2-type zinc fingers follow at residues 281-303 (YTCSECGKAFGKQSILNRHWRIH), 309-331 (YECRECGKTFSHGSSLTRHLISH), 337-359 (YKCIECGKAFSHVSSLTNHQSTH), 365-387 (YECMNCGKSFSRVSHLIEHLRIH), 393-415 (YECRICGKAFIHRSSLIHHQKIH), 421-443 (YECRECGKAFCCSSHLTRHQRIH), 449-471 (YECNKCLKVFSSLSFLVQHQSIH), 477-499 (FECQKCRKSFNQLESLNMHLRNH), 505-527 (YECSICGKAFSHRSSLLQHHRIH), 533-555 (YECIKCGKTFSCSSNLTVHQRIH), and 561-583 (YKCNECGKAFSKGSNLTAHQRVH).

Belongs to the krueppel C2H2-type zinc-finger protein family.

Its subcellular location is the nucleus. In terms of biological role, may be involved in transcriptional regulation. In Pongo abelii (Sumatran orangutan), this protein is Zinc finger protein 181 (ZNF181).